We begin with the raw amino-acid sequence, 119 residues long: Ig heavy chain V region X44 (119 aa).

One can recognise an Ig-like domain in the interval 1 to 117 (EVKLLESGGG…WGQGTLVTVS (117 aa)).

The chain is Ig heavy chain V region X44 from Mus musculus (Mouse).